The sequence spans 82 residues: UPF0180 protein BAA_1480 (82 aa).

It belongs to the UPF0180 family.

This chain is UPF0180 protein BAA_1480, found in Bacillus anthracis (strain A0248).